The sequence spans 374 residues: Nudix hydrolase 20, chloroplastic (374 aa).

Residues 1–49 constitute a chloroplast transit peptide; the sequence is MASGFCSLALTVTTSLFSSHAITRRVLPILRWRSSSMSLSPLRHSRALS. Residues 205–346 form the Nudix hydrolase domain; that stretch reads GYGVHMNGYV…KANCSLVIID (142 aa). Positions 244–265 match the Nudix box motif; the sequence is GGLPHGISCGGNLVKECEEEAG. E259 and E263 together coordinate Mg(2+).

It belongs to the Nudix hydrolase family. It depends on Mg(2+) as a cofactor. Requires Mn(2+) as cofactor. Expressed in leaves and inflorescences.

It localises to the plastid. The protein localises to the chloroplast. Probably mediates the hydrolysis of some nucleoside diphosphate derivatives. In Arabidopsis thaliana (Mouse-ear cress), this protein is Nudix hydrolase 20, chloroplastic (NUDT20).